Reading from the N-terminus, the 421-residue chain is MRKPSSGQPAGLDAWDETRSLATHAGPDFALYVGDSLDCLAKLPDESINTVVTSPPYWAVRDYEHDEQLGLEDEVDDYVERLVKIFREVYRVLATDGSAWLNIGDSYFNKQITVGGKPPRTGWKRNKQLSLVPFRVALALQDDGWWIRNVAVWHKPNAMPASVRDRLTVTWEPVFLLTKSERYYFNLDEIRVPHQTSDAIERRRAESGTVTGKAQGKKELRKWLNSPRHRATIEGIKEVERRPNAPAAVELASYLRTALKEKKRSIAWVAEQLDLPFERTRHYFRTDEIGSRLPPPEVWEQLKDLLELDATYDEAMTVEVGDNVFRNHPNGKNPGDLLSIPTAPSGANHFAVMPRKLAHFALKATLPMNGSCLDPFMGSGTTGRVVRELGGRFVGVDVNEHYMTDYLVESGVISPETETLW.

The protein belongs to the N(4)/N(6)-methyltransferase family. N(4) subfamily.

It catalyses the reaction a 2'-deoxycytidine in DNA + S-adenosyl-L-methionine = an N(4)-methyl-2'-deoxycytidine in DNA + S-adenosyl-L-homocysteine + H(+). In terms of biological role, a beta subtype methylase, recognizes the double-stranded sequence 5'-GGCCNNNNNGGCC-3', methylates C-? on both strands, and protects the DNA from cleavage by the SfiI endonuclease. The sequence is that of Type II methyltransferase M.SfiI from Streptomyces fimbriatus.